Reading from the N-terminus, the 99-residue chain is UPF0235 protein HS_1657 (99 aa).

Belongs to the UPF0235 family.

In Histophilus somni (strain 129Pt) (Haemophilus somnus), this protein is UPF0235 protein HS_1657.